Reading from the N-terminus, the 38-residue chain is Large ribosomal subunit protein bL36 (38 aa).

This sequence belongs to the bacterial ribosomal protein bL36 family.

In Proteus mirabilis (strain HI4320), this protein is Large ribosomal subunit protein bL36.